Consider the following 443-residue polypeptide: Transcriptional adapter 2-alpha (443 aa).

At Ser-6 the chain carries Phosphoserine. Residues 12–69 (SDKPPCRGCSSYLMEPYIKCAECGPPPFFLCLQCFTRGFEYKKHQSDHTYEIMTSDFP) form a ZZ-type zinc finger. Zn(2+) contacts are provided by Cys-17, Cys-20, Cys-31, Cys-34, Cys-42, Cys-45, His-55, and His-59. An SANT domain is found at 70 to 122 (VLDPSWTAQEEMALLEAVMDCGFGNWQDVANQMCTKTKEECEKHYMKHFINNP). Residues Lys-132 and Lys-138 each participate in a glycyl lysine isopeptide (Lys-Gly) (interchain with G-Cter in SUMO2) cross-link. Positions 356–443 (NSGRRSAPPL…LIREGYITKA (88 aa)) constitute an SWIRM domain. Residues 426-435 (KTRKIYDFLI) mediate DNA binding.

In terms of assembly, interacts with GCN5 and NR3C1. Associated with the P/CAF protein in the PCAF complex. Component of the PCAF complex, at least composed of TADA2L/ADA2, TADA3L/ADA3, TAF5L/PAF65-beta, TAF6L/PAF65-alpha, TAF10/TAFII30, TAF12/TAFII20, TAF9/TAFII31 and TRRAP. Component of the ADA2A-containing complex (ATAC), composed of KAT14, KAT2A, TADA2L, TADA3L, ZZ3, MBIP, WDR5, YEATS2, CCDC101 and DR1. Interacts with CCDC134.

It is found in the nucleus. Its subcellular location is the chromosome. Its function is as follows. Component of the ATAC complex, a complex with histone acetyltransferase activity on histones H3 and H4. Required for the function of some acidic activation domains, which activate transcription from a distant site. Binds double-stranded DNA. Binds dinucleosomes, probably at the linker region between neighboring nucleosomes. Plays a role in chromatin remodeling. May promote TP53/p53 'Lys-321' acetylation, leading to reduced TP53 stability and transcriptional activity. May also promote XRCC6 acetylation thus facilitating cell apoptosis in response to DNA damage. The protein is Transcriptional adapter 2-alpha (Tada2a) of Rattus norvegicus (Rat).